Consider the following 864-residue polypeptide: Valine--tRNA ligase (864 aa).

The short motif at 42-52 is the 'HIGH' region element; it reads PTISGKLHIGH. The short motif at 589-593 is the 'KMSKS' region element; the sequence is KMSKS. Lys592 serves as a coordination point for ATP.

The protein belongs to the class-I aminoacyl-tRNA synthetase family. ValS type 2 subfamily. In terms of assembly, monomer.

Its subcellular location is the cytoplasm. It carries out the reaction tRNA(Val) + L-valine + ATP = L-valyl-tRNA(Val) + AMP + diphosphate. In terms of biological role, catalyzes the attachment of valine to tRNA(Val). As ValRS can inadvertently accommodate and process structurally similar amino acids such as threonine, to avoid such errors, it has a 'posttransfer' editing activity that hydrolyzes mischarged Thr-tRNA(Val) in a tRNA-dependent manner. The sequence is that of Valine--tRNA ligase from Wolbachia pipientis wMel.